We begin with the raw amino-acid sequence, 1302 residues long: Phosphoribosylformylglycinamidine synthase (1302 aa).

ATP-binding positions include 307-318 and Ala678; that span reads GASTGSGGEIRD. Residues Glu718, Asn722, and Asp891 each coordinate Mg(2+). One can recognise a Glutamine amidotransferase type-1 domain in the interval 1049-1302; it reads MAILREQGVN…MFQNARKNIG (254 aa). Catalysis depends on Cys1142, which acts as the Nucleophile. Catalysis depends on residues His1267 and Glu1269.

This sequence in the N-terminal section; belongs to the FGAMS family. In terms of assembly, monomer.

It localises to the cytoplasm. The enzyme catalyses N(2)-formyl-N(1)-(5-phospho-beta-D-ribosyl)glycinamide + L-glutamine + ATP + H2O = 2-formamido-N(1)-(5-O-phospho-beta-D-ribosyl)acetamidine + L-glutamate + ADP + phosphate + H(+). Its pathway is purine metabolism; IMP biosynthesis via de novo pathway; 5-amino-1-(5-phospho-D-ribosyl)imidazole from N(2)-formyl-N(1)-(5-phospho-D-ribosyl)glycinamide: step 1/2. Its function is as follows. Phosphoribosylformylglycinamidine synthase involved in the purines biosynthetic pathway. Catalyzes the ATP-dependent conversion of formylglycinamide ribonucleotide (FGAR) and glutamine to yield formylglycinamidine ribonucleotide (FGAM) and glutamate. In Vibrio parahaemolyticus serotype O3:K6 (strain RIMD 2210633), this protein is Phosphoribosylformylglycinamidine synthase.